The sequence spans 239 residues: Phospholipase A2 (239 aa).

The signal sequence occupies residues 1-19 (MSLIIVLVISVLSADAVLS). Positions 20-105 (MDNELYLNLE…GRCLSVGESE (86 aa)) are excised as a propeptide. Ca(2+) is bound by residues Trp113, Gly115, and Gly117. Intrachain disulfides connect Cys114/Cys136, Cys135/Cys174, Cys142/Cys167, Cys165/Cys202, and Cys207/Cys217. The active site involves His139. Asp140 is a Ca(2+) binding site. The propeptide occupies 211–213 (RSP).

It belongs to the phospholipase A2 family. Group III subfamily. In terms of assembly, heterodimer composed of a small subunit and a large subunit; disulfid-linked. The cofactor is Ca(2+). Expressed by the venom gland.

Its subcellular location is the secreted. It carries out the reaction a 1,2-diacyl-sn-glycero-3-phosphocholine + H2O = a 1-acyl-sn-glycero-3-phosphocholine + a fatty acid + H(+). Its function is as follows. Toxic phospholipase A2, which may catalyze the calcium-dependent hydrolysis of the 2-acyl groups in 3-sn-phosphoglycerides. Inhibits both skeletal (RYR1) and cardiac (RYR2) ryanodine receptors (calcium release channels). Probably blocks ryanodine receptors by generating a lipid product. This chain is Phospholipase A2, found in Hoffmannihadrurus gertschi (Scorpion).